Reading from the N-terminus, the 329-residue chain is Porphobilinogen deaminase (329 aa).

Cys-253 bears the S-(dipyrrolylmethanemethyl)cysteine mark.

The protein belongs to the HMBS family. Monomer. The cofactor is dipyrromethane.

It carries out the reaction 4 porphobilinogen + H2O = hydroxymethylbilane + 4 NH4(+). In terms of biological role, tetrapolymerization of the monopyrrole PBG into the hydroxymethylbilane pre-uroporphyrinogen in several discrete steps. This chain is Porphobilinogen deaminase, found in Leifsonia xyli subsp. xyli (strain CTCB07).